A 700-amino-acid polypeptide reads, in one-letter code: Elongation factor G (700 aa).

The tr-type G domain maps to 8-290 (ERYRNIGISA…AVIDYLPSPV (283 aa)). GTP contacts are provided by residues 17–24 (AHIDAGKT), 88–92 (DTPGH), and 142–145 (NKMD).

The protein belongs to the TRAFAC class translation factor GTPase superfamily. Classic translation factor GTPase family. EF-G/EF-2 subfamily.

The protein resides in the cytoplasm. Its function is as follows. Catalyzes the GTP-dependent ribosomal translocation step during translation elongation. During this step, the ribosome changes from the pre-translocational (PRE) to the post-translocational (POST) state as the newly formed A-site-bound peptidyl-tRNA and P-site-bound deacylated tRNA move to the P and E sites, respectively. Catalyzes the coordinated movement of the two tRNA molecules, the mRNA and conformational changes in the ribosome. This is Elongation factor G from Leptothrix cholodnii (strain ATCC 51168 / LMG 8142 / SP-6) (Leptothrix discophora (strain SP-6)).